The following is a 2206-amino-acid chain: Genome polyprotein (2206 aa).

Gly2 is lipidated: N-myristoyl glycine; by host. Over 2–1517 (GAQVSSQKVG…NINRAMTILQ (1516 aa)) the chain is Cytoplasmic. 2 amphipathic alpha-helix regions span residues 579-599 (GVDDLITEVAQNALALSLPKP) and 579-603 (GVDDLITEVAQNALALSLPKPQSNL). Catalysis depends on for protease 2A activity residues His898 and Asp916. The Zn(2+) site is built by Cys933 and Cys935. Catalysis depends on Cys987, which acts as the For protease 2A activity. Cys993 and His995 together coordinate Zn(2+). Positions 1125-1197 (GDSWLKKFTE…HQSCPSQEHQ (73 aa)) are membrane-binding. An oligomerization region spans residues 1125 to 1263 (GDSWLKKFTE…SPGTGKSVAT (139 aa)). An RNA-binding region spans residues 1146–1150 (SNKIS). In terms of domain architecture, SF3 helicase spans 1229-1385 (EHTINNYIQF…SEYSRDGKLN (157 aa)). 1253-1260 (GSPGTGKS) is a binding site for ATP. Cys1393, Cys1396, Cys1405, and Cys1410 together coordinate Zn(2+). The segment at 1393–1410 (CKNCHQPANFKRCCPLVC) adopts a C4-type zinc-finger fold. An RNA-binding region spans residues 1437–1444 (EKNRRSNI). Residues 1448-1453 (MEALFQ) are oligomerization. The stretch at 1518-1533 (AVTTFAAVAGVVYVMY) is an intramembrane region. The Cytoplasmic segment spans residues 1534–2206 (KLFAGHQGAY…TLYRRWLDSF (673 aa)). Tyr1543 bears the O-(5'-phospho-RNA)-tyrosine mark. The region spanning 1563–1741 (GPGFDYAVAM…FAAALKRSYF (179 aa)) is the Peptidase C3 domain. Residues His1602, Glu1633, and Cys1709 each act as for protease 3C activity in the active site. Residues 1972-2087 (EKLFAFDYTG…SYPHEVDASL (116 aa)) form the RdRp catalytic domain. Asp1978 and Asp2073 together coordinate Mg(2+).

It belongs to the picornaviruses polyprotein family. As to quaternary structure, interacts with capsid protein VP1 and capsid protein VP3 to form heterotrimeric protomers. Interacts with capsid protein VP0, and capsid protein VP3 to form heterotrimeric protomers. Interacts with human PVR. Five protomers subsequently associate to form pentamers which serve as building blocks for the capsid. Interacts with capsid protein VP2, capsid protein VP3 and capsid protein VP4 following cleavage of capsid protein VP0. In terms of assembly, interacts with capsid protein VP1 and capsid protein VP3 in the mature capsid. As to quaternary structure, interacts with capsid protein VP0 and capsid protein VP1 to form heterotrimeric protomers. Five protomers subsequently associate to form pentamers which serve as building blocks for the capsid. Interacts with capsid protein VP4 in the mature capsid. Interacts with protein 2C; this interaction may be important for virion morphogenesis. Interacts with capsid protein VP1 and capsid protein VP3. In terms of assembly, homodimer. As to quaternary structure, homohexamer; forms a hexameric ring structure with 6-fold symmetry characteristic of AAA+ ATPases. Interacts (via N-terminus) with host RTN3 (via reticulon domain); this interaction is important for viral replication. Interacts with capsid protein VP3; this interaction may be important for virion morphogenesis. Interacts with protein 3CD. In terms of assembly, homodimer. Interacts with host GBF1. Interacts (via GOLD domain) with host ACBD3 (via GOLD domain); this interaction allows the formation of a viral protein 3A/ACBD3 heterotetramer with a 2:2 stoichiometry, which will stimulate the recruitment of host PI4KB in order to synthesize PI4P at the viral RNA replication sites. As to quaternary structure, interacts with RNA-directed RNA polymerase. Interacts with protein 3AB and with RNA-directed RNA polymerase. In terms of assembly, interacts with Viral protein genome-linked and with protein 3CD. The cofactor is Mg(2+). In terms of processing, specific enzymatic cleavages in vivo by the viral proteases yield processing intermediates and the mature proteins. Post-translationally, myristoylation is required for the formation of pentamers during virus assembly. Further assembly of 12 pentamers and a molecule of genomic RNA generates the provirion. During virion maturation, immature virions are rendered infectious following cleavage of VP0 into VP4 and VP2. This maturation seems to be an autocatalytic event triggered by the presence of RNA in the capsid and it is followed by a conformational change infectious virion. In terms of processing, myristoylation is required during RNA encapsidation and formation of the mature virus particle. Post-translationally, VPg is uridylylated by the polymerase into VPg-pUpU. This acts as a nucleotide-peptide primer for the genomic RNA replication.

The protein resides in the virion. The protein localises to the host cytoplasm. It is found in the host cytoplasmic vesicle membrane. Its subcellular location is the host nucleus. The enzyme catalyses a ribonucleoside 5'-triphosphate + H2O = a ribonucleoside 5'-diphosphate + phosphate + H(+). It carries out the reaction Selective cleavage of Tyr-|-Gly bond in the picornavirus polyprotein.. The catalysed reaction is RNA(n) + a ribonucleoside 5'-triphosphate = RNA(n+1) + diphosphate. It catalyses the reaction Selective cleavage of Gln-|-Gly bond in the poliovirus polyprotein. In other picornavirus reactions Glu may be substituted for Gln, and Ser or Thr for Gly.. Replication or transcription is subject to high level of random mutations by the nucleotide analog ribavirin. In terms of biological role, forms an icosahedral capsid of pseudo T=3 symmetry with capsid proteins VP2 and VP3. The capsid is 300 Angstroms in diameter, composed of 60 copies of each capsid protein and enclosing the viral positive strand RNA genome. Capsid protein VP1 mainly forms the vertices of the capsid. Capsid protein VP1 interacts with host cell receptor PVR to provide virion attachment to target host cells. This attachment induces virion internalization predominantly through clathrin- and caveolin-independent endocytosis in Hela cells and through caveolin-mediated endocytosis in brain microvascular endothelial cells. Tyrosine kinases are probably involved in the entry process. Virus binding to PVR induces increased junctional permeability and rearrangement of junctional proteins. Modulation of endothelial tight junctions, as well as cytolytic infection of endothelial cells themselves, may result in loss of endothelial integrity which may help the virus to reach the CNS. After binding to its receptor, the capsid undergoes conformational changes. Capsid protein VP1 N-terminus (that contains an amphipathic alpha-helix) and capsid protein VP4 are externalized. Together, they shape a pore in the host membrane through which viral genome is translocated to host cell cytoplasm. Forms an icosahedral capsid of pseudo T=3 symmetry with capsid proteins VP2 and VP3. The capsid is 300 Angstroms in diameter, composed of 60 copies of each capsid protein and enclosing the viral positive strand RNA genome. Functionally, lies on the inner surface of the capsid shell. After binding to the host receptor, the capsid undergoes conformational changes. Capsid protein VP4 is released, Capsid protein VP1 N-terminus is externalized, and together, they shape a pore in the host membrane through which the viral genome is translocated into the host cell cytoplasm. Its function is as follows. Component of immature procapsids, which is cleaved into capsid proteins VP4 and VP2 after maturation. Allows the capsid to remain inactive before the maturation step. In terms of biological role, cysteine protease that cleaves viral polyprotein and specific host proteins. It is responsible for the autocatalytic cleavage between the P1 and P2 regions, which is the first cleavage occurring in the polyprotein. Also cleaves the host translation initiation factor EIF4G1, in order to shut down the capped cellular mRNA translation. Inhibits the host nucleus-cytoplasm protein and RNA trafficking by cleaving host members of the nuclear pores including NUP98, NUP62 and NUP153. Counteracts stress granule formation probably by antagonizing its assembly or promoting its dissassembly. Cleaves and inhibits host IFIH1/MDA5, thereby inhibiting the type-I IFN production and the establishment of the antiviral state. Cleaves and inhibits host MAVS, thereby inhibiting the type-I IFN production and the establishment of the antiviral state. Plays an essential role in the virus replication cycle by acting as a viroporin. Creates a pore in the host endoplasmic reticulum and as a consequence releases Ca2+ in the cytoplasm of infected cell. In turn, high levels of cytoplasmic calcium may trigger membrane trafficking and transport of viral ER-associated proteins to viroplasms, sites of viral genome replication. Functionally, induces and associates with structural rearrangements of intracellular membranes. Displays RNA-binding, nucleotide binding and NTPase activities. May play a role in virion morphogenesis and viral RNA encapsidation by interacting with the capsid protein VP3. Its function is as follows. Localizes the viral replication complex to the surface of membranous vesicles. Together with protein 3CD binds the Cis-Active RNA Element (CRE) which is involved in RNA synthesis initiation. Acts as a cofactor to stimulate the activity of 3D polymerase, maybe through a nucleid acid chaperone activity. In terms of biological role, localizes the viral replication complex to the surface of membranous vesicles. It inhibits host cell endoplasmic reticulum-to-Golgi apparatus transport and causes the disassembly of the Golgi complex, possibly through GBF1 interaction. This would result in depletion of MHC, trail receptors and IFN receptors at the host cell surface. Plays an essential role in viral RNA replication by recruiting ACBD3 and PI4KB at the viral replication sites, thereby allowing the formation of the rearranged membranous structures where viral replication takes place. Acts as a primer for viral RNA replication and remains covalently bound to viral genomic RNA. VPg is uridylylated prior to priming replication into VPg-pUpU. The oriI viral genomic sequence may act as a template for this. The VPg-pUpU is then used as primer on the genomic RNA poly(A) by the RNA-dependent RNA polymerase to replicate the viral genome. During genome replication, the VPg-RNA linkage is removed by the host TDP2, thereby accelerating replication. During the late stage of the replication cycle, host TDP2 is excluded from sites of viral RNA synthesis and encapsidation, allowing for the generation of progeny virions. Functionally, involved in the viral replication complex and viral polypeptide maturation. It exhibits protease activity with a specificity and catalytic efficiency that is different from protease 3C. Protein 3CD lacks polymerase activity. Protein 3CD binds to the 5'UTR of the viral genome. Its function is as follows. Major viral protease that mediates proteolytic processing of the polyprotein. Cleaves host EIF5B, contributing to host translation shutoff. Also cleaves host PABPC1, contributing to host translation shutoff. Cleaves host RIGI and thus contributes to the inhibition of type I interferon production. Cleaves host NLRP1, triggers host N-glycine-mediated degradation of the autoinhibitory NLRP1 N-terminal fragment. Inhibits the integrated stress response (ISR) in the infected cell by cleaving host G3BP1. Stress granule formation is thus inhibited, which allows protein synthesis and viral replication. In terms of biological role, replicates the viral genomic RNA on the surface of intracellular membranes. May form linear arrays of subunits that propagate along a strong head-to-tail interaction called interface-I. Covalently attaches UMP to a tyrosine of VPg, which is used to prime RNA synthesis. The positive stranded RNA genome is first replicated at virus induced membranous vesicles, creating a dsRNA genomic replication form. This dsRNA is then used as template to synthesize positive stranded RNA genomes. ss(+)RNA genomes are either translated, replicated or encapsidated. The chain is Genome polyprotein from Poliovirus type 3 (strain 23127).